The sequence spans 185 residues: Ribosome-recycling factor (185 aa).

Belongs to the RRF family.

The protein localises to the cytoplasm. In terms of biological role, responsible for the release of ribosomes from messenger RNA at the termination of protein biosynthesis. May increase the efficiency of translation by recycling ribosomes from one round of translation to another. The chain is Ribosome-recycling factor from Marinomonas sp. (strain MWYL1).